Reading from the N-terminus, the 549-residue chain is Probable protein kinase UbiB (549 aa).

One can recognise a Protein kinase domain in the interval 123 to 501; the sequence is DFNETPLASA…QQQAHKSNYL (379 aa). ATP is bound by residues 129 to 137 and Lys152; that span reads LASASISQV. Asp287 (proton acceptor) is an active-site residue. 2 helical membrane-spanning segments follow: residues 498 to 518 and 520 to 540; these read SNYL…LFNQ and ATLW…IIGW.

It belongs to the ABC1 family. UbiB subfamily.

The protein localises to the cell inner membrane. Its pathway is cofactor biosynthesis; ubiquinone biosynthesis [regulation]. Functionally, is probably a protein kinase regulator of UbiI activity which is involved in aerobic coenzyme Q (ubiquinone) biosynthesis. The chain is Probable protein kinase UbiB from Shewanella sp. (strain MR-7).